Reading from the N-terminus, the 393-residue chain is 1-deoxy-D-xylulose 5-phosphate reductoisomerase (393 aa).

NADPH contacts are provided by threonine 16, glycine 17, serine 18, isoleucine 19, alanine 42, arginine 43, asparagine 44, and asparagine 127. Lysine 128 provides a ligand contact to 1-deoxy-D-xylulose 5-phosphate. Glutamate 129 provides a ligand contact to NADPH. Mn(2+) is bound at residue aspartate 153. Positions 154, 155, 179, and 202 each coordinate 1-deoxy-D-xylulose 5-phosphate. Glutamate 155 lines the Mn(2+) pocket. Glycine 208 serves as a coordination point for NADPH. The 1-deoxy-D-xylulose 5-phosphate site is built by serine 215, asparagine 220, lysine 221, and glutamate 224. Glutamate 224 contributes to the Mn(2+) binding site.

This sequence belongs to the DXR family. Mg(2+) serves as cofactor. Requires Mn(2+) as cofactor.

It carries out the reaction 2-C-methyl-D-erythritol 4-phosphate + NADP(+) = 1-deoxy-D-xylulose 5-phosphate + NADPH + H(+). It functions in the pathway isoprenoid biosynthesis; isopentenyl diphosphate biosynthesis via DXP pathway; isopentenyl diphosphate from 1-deoxy-D-xylulose 5-phosphate: step 1/6. Its function is as follows. Catalyzes the NADPH-dependent rearrangement and reduction of 1-deoxy-D-xylulose-5-phosphate (DXP) to 2-C-methyl-D-erythritol 4-phosphate (MEP). This is 1-deoxy-D-xylulose 5-phosphate reductoisomerase from Jannaschia sp. (strain CCS1).